We begin with the raw amino-acid sequence, 131 residues long: Profilin-2 (131 aa).

Belongs to the profilin family. In terms of assembly, occurs in many kinds of cells as a complex with monomeric actin in a 1:1 ratio.

It is found in the cytoplasm. The protein resides in the cytoskeleton. Functionally, binds to actin and affects the structure of the cytoskeleton. At high concentrations, profilin prevents the polymerization of actin, whereas it enhances it at low concentrations. By binding to PIP2, it inhibits the formation of IP3 and DG. This Lilium longiflorum (Trumpet lily) protein is Profilin-2.